The following is a 315-amino-acid chain: Secreted frizzled-related protein 3 (315 aa).

The N-terminal stretch at 1 to 21 is a signal peptide; sequence MWRGLPALALAALLLLGRAPA. The FZ domain maps to 22–142; sequence GRAAACEPVR…LYDRGVCISP (121 aa). 5 cysteine pairs are disulfide-bonded: Cys-27/Cys-88, Cys-35/Cys-81, Cys-72/Cys-111, Cys-100/Cys-139, and Cys-104/Cys-128. N-linked (GlcNAc...) asparagine glycosylation occurs at Asn-41. Positions 170–290 constitute an NTR domain; it reads CKCKPIKATQ…WDQKLRHLGK (121 aa). Residues 284–315 form a disordered region; it reads KLRHLGKGKGEPGQSDSALKTGKPGNARQTRS.

Belongs to the secreted frizzled-related protein (sFRP) family.

The protein localises to the secreted. Functionally, soluble frizzled-related proteins (sFRPS) function as modulators of Wnt signaling through direct interaction with Wnts. They have a role in regulating cell growth and differentiation in specific cell types. SFRP3/FRZB appears to be involved in limb skeletogenesis. Antagonist of Wnt8 signaling. Regulates chondrocyte maturation and long bone development. In Gallus gallus (Chicken), this protein is Secreted frizzled-related protein 3 (FRZB).